We begin with the raw amino-acid sequence, 891 residues long: Translation initiation factor IF-2 (891 aa).

Positions 50-303 (KKEHGSADES…TSMQHGFDKS (254 aa)) are disordered. 2 stretches are compositionally biased toward basic and acidic residues: residues 102 to 237 (TLEE…KTAD) and 245 to 261 (HARE…EQQP). The tr-type G domain maps to 390–559 (GRAPVVTIMG…LLQSEVLELT (170 aa)). The segment at 399–406 (GHVDHGKT) is G1. 399 to 406 (GHVDHGKT) lines the GTP pocket. A G2 region spans residues 424–428 (GITQH). The interval 445–448 (DTPG) is G3. GTP contacts are provided by residues 445–449 (DTPGH) and 499–502 (NKID). A G4 region spans residues 499-502 (NKID). Positions 535-537 (SAK) are G5.

The protein belongs to the TRAFAC class translation factor GTPase superfamily. Classic translation factor GTPase family. IF-2 subfamily.

It is found in the cytoplasm. Functionally, one of the essential components for the initiation of protein synthesis. Protects formylmethionyl-tRNA from spontaneous hydrolysis and promotes its binding to the 30S ribosomal subunits. Also involved in the hydrolysis of GTP during the formation of the 70S ribosomal complex. The sequence is that of Translation initiation factor IF-2 from Aliivibrio salmonicida (strain LFI1238) (Vibrio salmonicida (strain LFI1238)).